The following is a 432-amino-acid chain: Histidine--tRNA ligase (432 aa).

Belongs to the class-II aminoacyl-tRNA synthetase family. In terms of assembly, homodimer.

It localises to the cytoplasm. It carries out the reaction tRNA(His) + L-histidine + ATP = L-histidyl-tRNA(His) + AMP + diphosphate + H(+). The protein is Histidine--tRNA ligase of Symbiobacterium thermophilum (strain DSM 24528 / JCM 14929 / IAM 14863 / T).